A 163-amino-acid polypeptide reads, in one-letter code: Odorant-binding protein 1a (163 aa).

An N-terminal signal peptide occupies residues 1 to 16; the sequence is MAKFLLLALTFGLAHA. Cystine bridges form between Cys50-Cys54 and Cys69-Cys161.

It belongs to the calycin superfamily. Lipocalin family. May form a heterodimer with OBP1B. Post-translationally, the N-terminus may be blocked. Expressed in nasal mucosa (at protein level). Specifically detected in septal and lateral nasal glands.

It localises to the secreted. Binds the chemical odorant 2-isobutyl-3-methoxypyrazine. This is Odorant-binding protein 1a from Mus musculus (Mouse).